The primary structure comprises 1203 residues: Nitric oxide synthase 3 (1203 aa).

Residues 1 to 71 form a disordered region; the sequence is MGNLKSVAQE…PPEGPKFPRV (71 aa). Glycine 2 carries N-myristoyl glycine lipidation. Residues cysteine 15 and cysteine 26 are each lipidated (S-palmitoyl cysteine). Over residues 15 to 27 the composition is skewed to gly residues; the sequence is CGLGLGLGLGLCG. At threonine 33 the chain carries Phosphothreonine. Pro residues predominate over residues 33-66; it reads TPAPEPSRAPASLLPPAPEHSPPSSPLTQPPEGP. 2 residues coordinate Zn(2+): cysteine 94 and cysteine 99. The interval 98–486 is interaction with NOSIP; sequence RCLGSLVFPR…PDPWKGSAAK (389 aa). Serine 102 provides a ligand contact to (6R)-L-erythro-5,6,7,8-tetrahydrobiopterin. A Phosphoserine; by CDK5 modification is found at serine 114. Cysteine 184 lines the heme b pocket. L-arginine is bound by residues glutamine 247, tryptophan 356, tyrosine 357, and glutamate 361. Position 365 (arginine 365) interacts with (6R)-L-erythro-5,6,7,8-tetrahydrobiopterin. Asparagine 366 contacts L-arginine. The (6R)-L-erythro-5,6,7,8-tetrahydrobiopterin site is built by alanine 446, tryptophan 447, and phenylalanine 460. Tyrosine 475 is a heme b binding site. The calmodulin-binding stretch occupies residues 491-510; that stretch reads TRKKTFKEVANAVKISASLM. Threonine 495 carries the phosphothreonine; by AMPK modification. A Flavodoxin-like domain is found at 520–703; that stretch reads ATILYGSETG…AFRGWAQAAF (184 aa). Residues serine 526, glutamate 527, threonine 528, arginine 530, serine 572, and threonine 573 each contribute to the FMN site. Phosphoserine occurs at positions 615, 633, and 638. The FMN site is built by serine 654, cysteine 661, glutamate 687, and glutamine 691. Residues 756-1002 enclose the FAD-binding FR-type domain; sequence RKMFQATIRS…IRGAPSFRLP (247 aa). Arginine 776 serves as a coordination point for NADP(+). An FAD-binding site is contributed by histidine 798. Residue serine 836 is modified to Phosphoserine. FAD-binding residues include arginine 938, tyrosine 940, serine 941, threonine 956, alanine 958, tyrosine 962, valine 975, cysteine 976, and serine 977. Threonine 1016, arginine 1049, serine 1078, arginine 1079, lysine 1085, tyrosine 1087, and glutamine 1089 together coordinate NADP(+). Threonine 1175 bears the Phosphothreonine mark. A Phosphoserine; by AMPK modification is found at serine 1177. Position 1179 is a phosphoserine (serine 1179).

The protein belongs to the NOS family. Homodimer. Interacts with NOSIP and NOSTRIN. Interacts with HSP90AB1. Forms a complex with ASL, ASS1 and SLC7A1; the complex regulates cell-autonomous L-arginine synthesis and citrulline recycling while channeling extracellular L-arginine to nitric oxide synthesis pathway. The cofactor is heme b. FAD is required as a cofactor. It depends on FMN as a cofactor. Requires (6R)-L-erythro-5,6,7,8-tetrahydrobiopterin as cofactor. In terms of processing, phosphorylation by AMPK at Ser-1177 in the presence of Ca(2+)-calmodulin (CaM) activates activity. In absence of Ca(2+)-calmodulin, AMPK also phosphorylates Thr-495, resulting in inhibition of activity. Phosphorylation of Ser-114 by CDK5 reduces activity. As to expression, platelets, placenta, liver and kidney.

The protein resides in the cell membrane. It localises to the membrane. Its subcellular location is the caveola. It is found in the cytoplasm. The protein localises to the cytoskeleton. The protein resides in the golgi apparatus. The catalysed reaction is 2 L-arginine + 3 NADPH + 4 O2 + H(+) = 2 L-citrulline + 2 nitric oxide + 3 NADP(+) + 4 H2O. With respect to regulation, stimulated by calcium/calmodulin. Inhibited by NOSIP and NOSTRIN. In terms of biological role, produces nitric oxide (NO) which is implicated in vascular smooth muscle relaxation through a cGMP-mediated signal transduction pathway. NO mediates vascular endothelial growth factor (VEGF)-induced angiogenesis in coronary vessels and promotes blood clotting through the activation of platelets. Functionally, lacks eNOS activity, dominant-negative form that may down-regulate eNOS activity by forming heterodimers with isoform 1. The chain is Nitric oxide synthase 3 from Homo sapiens (Human).